The following is a 198-amino-acid chain: MQSGTRWRVLGLCLLSIGVWGQDGNEEMGSITQTPYQVSISGTTVILTCSQHLGSEAQWQHNGKNKEDSGDRLFLPEFSEMEQSGYYVCYPRGSNPEDASHHLYLKARVCENCMEMDVMAVATIVIVDICITLGLLLLVYYWSKNRKAKAKPVTRGAGAGGRQRGQNKERPPPVPNPDYEPIRKGQQDLYSGLNQRRI.

An N-terminal signal peptide occupies residues 1–21 (MQSGTRWRVLGLCLLSIGVWG). The Extracellular portion of the chain corresponds to 22-117 (QDGNEEMGSI…RVCENCMEMD (96 aa)). Positions 37-107 (QVSISGTTVI…DASHHLYLKA (71 aa)) constitute an Ig-like domain. Cys-49 and Cys-89 are joined by a disulfide. Residues 118–138 (VMAVATIVIVDICITLGLLLL) form a helical membrane-spanning segment. The Cytoplasmic segment spans residues 139–198 (VYYWSKNRKAKAKPVTRGAGAGGRQRGQNKERPPPVPNPDYEPIRKGQQDLYSGLNQRRI). The disordered stretch occupies residues 152-198 (PVTRGAGAGGRQRGQNKERPPPVPNPDYEPIRKGQQDLYSGLNQRRI). The tract at residues 166 to 183 (QNKERPPPVPNPDYEPIR) is NUMB-binding region. The 28-residue stretch at 169 to 196 (ERPPPVPNPDYEPIRKGQQDLYSGLNQR) folds into the ITAM domain. The interval 170-177 (RPPPVPNP) is proline-rich sequence. Tyr-179 and Tyr-190 each carry phosphotyrosine. Residues 188 to 198 (DLYSGLNQRRI) show a composition bias toward polar residues.

As to quaternary structure, the TCR-CD3 complex is composed of a CD3D/CD3E and a CD3G/CD3E heterodimers that preferentially associate with TCRalpha and TCRbeta, respectively, to form TCRalpha/CD3E/CD3G and TCRbeta/CD3G/CD3E trimers. In turn, the hexamer interacts with CD3Z homodimer to form the TCR-CD3 complex. Alternatively, TCRalpha and TCRbeta can be replaced by TCRgamma and TCRdelta. Interacts with CD6. Interacts (via Proline-rich sequence) with NCK1; the interaction is ligand dependent but independent of tyrosine kinase activation. Post-translationally, phosphorylated on Tyr residues after T-cell receptor triggering by LCK in association with CD4/CD8.

It localises to the cell membrane. Part of the TCR-CD3 complex present on T-lymphocyte cell surface that plays an essential role in adaptive immune response. When antigen presenting cells (APCs) activate T-cell receptor (TCR), TCR-mediated signals are transmitted across the cell membrane by the CD3 chains CD3D, CD3E, CD3G and CD3Z. All CD3 chains contain immunoreceptor tyrosine-based activation motifs (ITAMs) in their cytoplasmic domain. Upon TCR engagement, these motifs become phosphorylated by Src family protein tyrosine kinases LCK and FYN, resulting in the activation of downstream signaling pathways. In addition of this role of signal transduction in T-cell activation, CD3E plays an essential role in correct T-cell development. Also participates in internalization and cell surface down-regulation of TCR-CD3 complexes via endocytosis sequences present in CD3E cytosolic region. In addition to its role as a TCR coreceptor, it serves as a receptor for ITPRIPL1. Ligand recognition inhibits T-cell activation by promoting interaction with NCK1, which prevents CD3E-ZAP70 interaction and blocks the ERK-NFkB signaling cascade and calcium influx. This chain is T-cell surface glycoprotein CD3 epsilon chain (CD3E), found in Macaca fascicularis (Crab-eating macaque).